A 511-amino-acid polypeptide reads, in one-letter code: 2,3-bisphosphoglycerate-independent phosphoglycerate mutase (511 aa).

Mn(2+) contacts are provided by Asp-14 and Ser-64. Ser-64 functions as the Phosphoserine intermediate in the catalytic mechanism. Substrate is bound by residues His-125, 155–156 (RD), Arg-187, Arg-193, 259–262 (RADR), and Lys-333. Mn(2+) contacts are provided by Asp-400, His-404, Asp-441, His-442, and His-460.

Belongs to the BPG-independent phosphoglycerate mutase family. In terms of assembly, monomer. The cofactor is Mn(2+).

The enzyme catalyses (2R)-2-phosphoglycerate = (2R)-3-phosphoglycerate. It functions in the pathway carbohydrate degradation; glycolysis; pyruvate from D-glyceraldehyde 3-phosphate: step 3/5. Its function is as follows. Catalyzes the interconversion of 2-phosphoglycerate and 3-phosphoglycerate. The protein is 2,3-bisphosphoglycerate-independent phosphoglycerate mutase of Pseudomonas putida (strain ATCC 47054 / DSM 6125 / CFBP 8728 / NCIMB 11950 / KT2440).